Consider the following 617-residue polypeptide: uncharacterized protein (617 aa).

Residues 103-123 (AGVLLAKFFPLLFLYPLTYLA) traverse the membrane as a helical segment. The Protein kinase domain occupies 200-609 (FETREPVGSG…DILEAAKPFL (410 aa)). ATP-binding positions include 206 to 214 (VGSGCVAQV) and lysine 302. The Proton acceptor role is filled by aspartate 436.

The protein belongs to the protein kinase superfamily. ADCK protein kinase family.

Its subcellular location is the mitochondrion. It localises to the membrane. Its function is as follows. The function of this protein is not yet clear. It is not known if it has protein kinase activity and what type of substrate it would phosphorylate (Ser, Thr or Tyr). Involved in the mitochondrial import of CoQ precursors, plays a role in muscle mitochondrial function and fatty acid beta-oxidation. This is an uncharacterized protein from Mus musculus (Mouse).